A 141-amino-acid chain; its full sequence is Large ribosomal subunit protein uL13 (141 aa).

It belongs to the universal ribosomal protein uL13 family. Part of the 50S ribosomal subunit.

This protein is one of the early assembly proteins of the 50S ribosomal subunit, although it is not seen to bind rRNA by itself. It is important during the early stages of 50S assembly. The polypeptide is Large ribosomal subunit protein uL13 (Helicobacter pylori (strain G27)).